A 317-amino-acid polypeptide reads, in one-letter code: Aspartate carbamoyltransferase catalytic subunit (317 aa).

Carbamoyl phosphate-binding residues include Arg-66 and Thr-67. Lys-94 contributes to the L-aspartate binding site. Arg-116, His-144, and Gln-147 together coordinate carbamoyl phosphate. The L-aspartate site is built by Arg-177 and Arg-231. Residues Gly-272 and Pro-273 each coordinate carbamoyl phosphate.

Belongs to the aspartate/ornithine carbamoyltransferase superfamily. ATCase family. Heterododecamer (2C3:3R2) of six catalytic PyrB chains organized as two trimers (C3), and six regulatory PyrI chains organized as three dimers (R2).

The enzyme catalyses carbamoyl phosphate + L-aspartate = N-carbamoyl-L-aspartate + phosphate + H(+). It functions in the pathway pyrimidine metabolism; UMP biosynthesis via de novo pathway; (S)-dihydroorotate from bicarbonate: step 2/3. Its function is as follows. Catalyzes the condensation of carbamoyl phosphate and aspartate to form carbamoyl aspartate and inorganic phosphate, the committed step in the de novo pyrimidine nucleotide biosynthesis pathway. The chain is Aspartate carbamoyltransferase catalytic subunit from Nitrobacter winogradskyi (strain ATCC 25391 / DSM 10237 / CIP 104748 / NCIMB 11846 / Nb-255).